Reading from the N-terminus, the 644-residue chain is Pesticidal crystal protein Cry3Aa (644 aa).

Over residues 1–13 (MNPNNRSEHDTIK) the composition is skewed to basic and acidic residues. Residues 1-20 (MNPNNRSEHDTIKTTENNEV) form a disordered region. Positions 1 to 57 (MNPNNRSEHDTIKTTENNEVPTNHVQYPLAETPNPTLEDLNYKEFLRMTADNNTEAL) are cleaved as a propeptide — removed in mature form.

This sequence belongs to the delta endotoxin family.

Promotes colloidosmotic lysis by binding to the midgut epithelial cells of Coleoptera. This chain is Pesticidal crystal protein Cry3Aa (cry3Aa), found in Bacillus thuringiensis subsp. san diego.